Here is a 313-residue protein sequence, read N- to C-terminus: Ornithine carbamoyltransferase (313 aa).

Residues 57–60 (STRT), glutamine 84, arginine 108, and 135–138 (HPCQ) each bind carbamoyl phosphate. Residues asparagine 166, aspartate 230, and 234-235 (SM) each bind L-ornithine. Residues 270–271 (CL) and arginine 298 contribute to the carbamoyl phosphate site.

Belongs to the aspartate/ornithine carbamoyltransferase superfamily. OTCase family. In terms of assembly, homohexamer.

The protein resides in the cytoplasm. The enzyme catalyses carbamoyl phosphate + L-ornithine = L-citrulline + phosphate + H(+). The protein operates within amino-acid biosynthesis; L-arginine biosynthesis; L-arginine from L-ornithine and carbamoyl phosphate: step 1/3. In terms of biological role, reversibly catalyzes the transfer of the carbamoyl group from carbamoyl phosphate (CP) to the N(epsilon) atom of ornithine (ORN) to produce L-citrulline. In Gloeobacter violaceus (strain ATCC 29082 / PCC 7421), this protein is Ornithine carbamoyltransferase.